The primary structure comprises 147 residues: Protein OPG060 (147 aa).

The protein belongs to the orthopoxvirus OPG058 family.

In Bos taurus (Bovine), this protein is Protein OPG060 (OPG060).